A 568-amino-acid polypeptide reads, in one-letter code: Nitrite reductase (568 aa).

A signal peptide spans 1-25 (MPFGKPLVGTLLASLTLLGLATAHA). The tract at residues 26 to 54 (KDDMKAAEQYQGAASAVDPAHVVRTNGAP) is N-terminal tail. The region spanning 55–140 (DMSESEFNEA…AKYIQHTPPQ (86 aa)) is the Cytochrome c domain. Heme c contacts are provided by cysteine 72, cysteine 75, histidine 76, arginine 96, threonine 109, and methionine 113. The D1-heme domain stretch occupies residues 141–568 (PPEWGMPEMR…NVYNTQHDVY (428 aa)). Heme d1 contacts are provided by histidine 207, arginine 250, serine 251, tyrosine 270, arginine 397, and glutamine 508.

Homodimer. It depends on heme c as a cofactor. Heme is required as a cofactor.

The protein localises to the periplasm. The enzyme catalyses nitric oxide + Fe(III)-[cytochrome c] + H2O = Fe(II)-[cytochrome c] + nitrite + 2 H(+). It catalyses the reaction A + NH4(+) + H2O = hydroxylamine + AH2 + H(+). In Pseudomonas aeruginosa (strain ATCC 15692 / DSM 22644 / CIP 104116 / JCM 14847 / LMG 12228 / 1C / PRS 101 / PAO1), this protein is Nitrite reductase (nirS).